A 366-amino-acid polypeptide reads, in one-letter code: MYFLVADHREHHVIPFLKTDLQHIYQNPTQKKQIPLEIKQLFTGDYLICKSPSTILACIERKTYKDFAASLKDGRYKNRQKMLSLREQTKCQLYFFVEGPAFPNPQKKINHVAYASIITAMTHLMVRDHIFVIQTKNEAHSSQKLVQLFYAFSKEMVCVVPTSLTPTDEELCIKLWSSLSGISGVIGKILANTCSVAHLVSGQLPPQNIDQLKTPSNRPFPKKVKRMLISISKGNKELEIKLLSGVPNIGKKLAAEILKDHALLFFLNQPVECLANIQIAQKTRTIKLGMKRAEAIHYFLNWCGSARVTVDSQNITETSRPATIQATATQPAATQPLHEISNEALNEASNDASNEVTHTGHQTLFI.

The ERCC4 domain occupies 3–101; sequence FLVADHREHH…QLYFFVEGPA (99 aa).

The protein belongs to the asfivirus EP364R family.

In terms of biological role, plays a role in the inhibition of type I interferon signaling pathway. Mechanistically, specifically interacts with 2',3'-cGAMP and cleaves it via its phosphodiesterase activity. In turn, prevents 2',3'-cGAMP interaction with host ER-resident STING1 leading to inhibition of downstream signaling pathway and type I interferon production. The protein is ERCC4 domain-containing protein EP364R of African swine fever virus (isolate Pig/Kenya/KEN-50/1950) (ASFV).